We begin with the raw amino-acid sequence, 1534 residues long: Slit homolog 1 protein (1534 aa).

Residues 1-33 (MALTPGWGSSAGPVRPELWLLLWAAAWRLGASA) form the signal peptide. The region spanning 34–61 (CPALCTCTGTTVDCHGTGLQAIPKNIPR) is the LRRNT domain. LRR repeat units follow at residues 62-83 (NTER…DFAG), 86-107 (QLRV…AFDD), 110-131 (ELER…LFQN), 134-155 (ALSR…AFRG), 158-179 (DLKN…AFRA), and 182-203 (GLEV…SFNH). A glycan (N-linked (GlcNAc...) asparagine) is linked at asparagine 72. An N-linked (GlcNAc...) asparagine glycan is attached at asparagine 192. The LRRCT 1 domain maps to 215–265 (NHLFCDCHLAWLSQWLRQRPTIGLFTQCSGPASLRGLNVAEVQKSEFSCSG). In terms of domain architecture, LRRNT 2 spans 273–309 (PTCTLSSGSCPAMCTCSNGIVDCRGKGLTAIPANLPE). Cysteine 286 and cysteine 295 are joined by a disulfide. 5 LRR repeats span residues 310–331 (TMTE…AFSP), 334–355 (KLRR…AFQG), 358–379 (SLNS…VFGG), 382–403 (TLQL…AFQD), and 406–427 (NLSL…TFTS). A glycan (N-linked (GlcNAc...) asparagine) is linked at asparagine 406. Residues 439–489 (NPFICDCNLKWLADFLRTNPIETSGARCASPRRLANKRIGQIKSKKFRCSA) form the LRRCT 2 domain. Cystine bridges form between cysteine 443-cysteine 466, cysteine 445-cysteine 487, cysteine 513-cysteine 519, and cysteine 517-cysteine 526. The LRRNT 3 domain maps to 504 to 540 (NSECNSDVVCPHKCRCEANVVECSSLKLTKIPERIPQ). LRR repeat units follow at residues 541-562 (STAE…GMFK), 566-587 (HLKK…AFEG), 590-611 (SVSE…MFRG), 614-635 (GLRT…SFTG), and 638-659 (NVRL…AFDT). N-linked (GlcNAc...) asparagine glycosylation is present at asparagine 571. Residue asparagine 630 is glycosylated (N-linked (GlcNAc...) asparagine). The LRRCT 3 domain maps to 671 to 721 (NPFNCNCQLAWLGGWLRKRKIVTGNPRCQNPDFLRQIPLQDVAFPDFRCEE). 2 disulfide bridges follow: cysteine 675-cysteine 698 and cysteine 677-cysteine 719. Positions 725–761 (EGGCLPRPQCPQECACLDTVVRCSNKHLRALPKGIPK) constitute an LRRNT 4 domain. 3 N-linked (GlcNAc...) asparagine glycosylation sites follow: asparagine 762, asparagine 801, and asparagine 806. LRR repeat units follow at residues 762 to 783 (NVTE…LSTF), 785 to 806 (YLQL…SFTN), 809 to 830 (QLTT…AFQG), and 833 to 854 (SLRL…IFAD). The region spanning 866-916 (NPLYCDCHLRWLSSWVKTGYKEPGIARCAGPQDMEGKLLLTTPAKKFECQG) is the LRRCT 4 domain. EGF-like domains are found at residues 927–962 (DLCL…RDCE), 964–1003 (SLDS…PTCG), 1005–1041 (NTDD…KACE), 1043–1081 (LVDL…DNCS), 1083–1119 (NQDD…QLCE), and 1127–1163 (PKSP…PECE). Cystine bridges form between cysteine 929-cysteine 940, cysteine 934-cysteine 950, cysteine 952-cysteine 961, cysteine 968-cysteine 979, cysteine 973-cysteine 991, cysteine 993-cysteine 1002, cysteine 1009-cysteine 1020, cysteine 1014-cysteine 1029, cysteine 1031-cysteine 1040, cysteine 1047-cysteine 1060, cysteine 1054-cysteine 1069, cysteine 1071-cysteine 1080, cysteine 1087-cysteine 1098, cysteine 1092-cysteine 1107, cysteine 1109-cysteine 1118, cysteine 1131-cysteine 1142, cysteine 1136-cysteine 1151, and cysteine 1153-cysteine 1162. The N-linked (GlcNAc...) asparagine glycan is linked to asparagine 1026. Residue asparagine 1079 is glycosylated (N-linked (GlcNAc...) asparagine). In terms of domain architecture, Laminin G-like spans 1166–1339 (LSVNFVDRDT…QMKPGVVPGC (174 aa)). Asparagine 1189, asparagine 1259, and asparagine 1306 each carry an N-linked (GlcNAc...) asparagine glycan. Cystine bridges form between cysteine 1313-cysteine 1339, cysteine 1342-cysteine 1352, cysteine 1347-cysteine 1362, cysteine 1364-cysteine 1373, cysteine 1381-cysteine 1391, cysteine 1386-cysteine 1401, cysteine 1403-cysteine 1412, cysteine 1422-cysteine 1432, cysteine 1427-cysteine 1442, cysteine 1444-cysteine 1453, cysteine 1459-cysteine 1498, cysteine 1477-cysteine 1512, cysteine 1488-cysteine 1528, and cysteine 1492-cysteine 1530. EGF-like domains lie at 1340–1374 (EPCR…LHCD), 1377–1413 (ADGP…ALCN), and 1418–1454 (LAEP…ELCE). The 76-residue stretch at 1459–1534 (CRGDPVRDFH…PTKCGCALCA (76 aa)) folds into the CTCK domain.

Interacts with ROBO1 and GREM1. As to expression, predominantly expressed in adult forebrain. Expressed in fetal brain, lung and kidney.

The protein resides in the secreted. In terms of biological role, thought to act as molecular guidance cue in cellular migration, and function appears to be mediated by interaction with roundabout homolog receptors. During neural development involved in axonal navigation at the ventral midline of the neural tube and projection of axons to different regions. SLIT1 and SLIT2 together seem to be essential for midline guidance in the forebrain by acting as repulsive signal preventing inappropriate midline crossing by axons projecting from the olfactory bulb. This is Slit homolog 1 protein (SLIT1) from Homo sapiens (Human).